Reading from the N-terminus, the 186-residue chain is Large ribosomal subunit protein uL5 (186 aa).

The protein belongs to the universal ribosomal protein uL5 family. Part of the 50S ribosomal subunit; part of the 5S rRNA/L5/L18/L25 subcomplex. Contacts the 5S rRNA and the P site tRNA. Forms a bridge to the 30S subunit in the 70S ribosome.

Its function is as follows. This is one of the proteins that bind and probably mediate the attachment of the 5S RNA into the large ribosomal subunit, where it forms part of the central protuberance. In the 70S ribosome it contacts protein S13 of the 30S subunit (bridge B1b), connecting the 2 subunits; this bridge is implicated in subunit movement. Contacts the P site tRNA; the 5S rRNA and some of its associated proteins might help stabilize positioning of ribosome-bound tRNAs. In Ruegeria pomeroyi (strain ATCC 700808 / DSM 15171 / DSS-3) (Silicibacter pomeroyi), this protein is Large ribosomal subunit protein uL5.